A 504-amino-acid chain; its full sequence is Maturase K (504 aa).

Belongs to the intron maturase 2 family. MatK subfamily.

The protein localises to the plastid. It localises to the chloroplast. In terms of biological role, usually encoded in the trnK tRNA gene intron. Probably assists in splicing its own and other chloroplast group II introns. This is Maturase K from Gossypium turneri (Cotton).